The sequence spans 37 residues: Large ribosomal subunit protein bL36 (37 aa).

This sequence belongs to the bacterial ribosomal protein bL36 family.

In Salinispora tropica (strain ATCC BAA-916 / DSM 44818 / JCM 13857 / NBRC 105044 / CNB-440), this protein is Large ribosomal subunit protein bL36.